The sequence spans 227 residues: Putative ankyrin repeat protein L45 (227 aa).

ANK repeat units follow at residues 38-66 (FETN…NINH), 78-107 (CLEE…NIFH), 108-137 (NENC…DVRA), 139-167 (NDYA…DVRS), 168-197 (CDSY…NYRA), and 199-227 (NHHA…GITK).

The chain is Putative ankyrin repeat protein L45 from Acanthamoeba polyphaga mimivirus (APMV).